We begin with the raw amino-acid sequence, 309 residues long: E3 ubiquitin-protein ligase SINAT5 (309 aa).

An RING-type zinc finger spans residues 46–82 (CPVCTNSMYPPIHQCHNGHTLCSTCKSRVHNRCPTCR). The segment at 96–289 (VAESLELPCK…KELKLRVTGR (194 aa)) is SBD. An SIAH-type zinc finger spans residues 99 to 159 (SLELPCKYYN…LVAHLRDDHK (61 aa)). Positions 104, 111, 123, 127, 134, 141, 153, and 158 each coordinate Zn(2+).

It belongs to the SINA (Seven in absentia) family. Homodimer; homodimerization is essential for its function. Interacts with UBC28 and NAC021/NAC022. Interacts with SINAT6. Interacts with ATG6 and TRAF1A. Interacts with WAV3. Interacts with FREE1. As to expression, expressed at low level in the vascular tissue of mature roots. Expressed in lateral roots and in elongation zone of the main root upon stimulation by auxin. Colocalizes with NAC021/NAC022.

It is found in the nucleus. The protein localises to the cytoplasm. It catalyses the reaction S-ubiquitinyl-[E2 ubiquitin-conjugating enzyme]-L-cysteine + [acceptor protein]-L-lysine = [E2 ubiquitin-conjugating enzyme]-L-cysteine + N(6)-ubiquitinyl-[acceptor protein]-L-lysine.. It participates in protein modification; protein ubiquitination. E3 ubiquitin-protein ligase that mediates ubiquitination and subsequent proteasomal degradation of target proteins. E3 ubiquitin ligases accept ubiquitin from an E2 ubiquitin-conjugating enzyme in the form of a thioester and then directly transfers the ubiquitin to targeted substrates. Mediates the ubiquitination and proteasomal-dependent degradation of NAC021/NAC022, a transcription activator that functions downstream of the auxin signals, thereby acting as a down-regulator of auxin signals. Involved in the formation of lateral roots. Is antagonist to SINAT1, SINAT2, SINAT3 and SINAT4 by suppressing FREE1 ubiquitination and degradation mediated by SINAT1, SINAT2, SINAT3 and SINAT4, and promoting FREE1 accumulation. This Arabidopsis thaliana (Mouse-ear cress) protein is E3 ubiquitin-protein ligase SINAT5.